Consider the following 211-residue polypeptide: Endonuclease V (211 aa).

Residues D31 and E95 each coordinate Mg(2+). The disordered stretch occupies residues 182-211; the sequence is IYEVKNTPSPNRSRKKRGNRGKDNNNSQGN.

This sequence belongs to the endonuclease V family. Requires Mg(2+) as cofactor.

The protein localises to the cytoplasm. It carries out the reaction Endonucleolytic cleavage at apurinic or apyrimidinic sites to products with a 5'-phosphate.. DNA repair enzyme involved in the repair of deaminated bases. Selectively cleaves double-stranded DNA at the second phosphodiester bond 3' to a deoxyinosine leaving behind the intact lesion on the nicked DNA. This Pyrococcus horikoshii (strain ATCC 700860 / DSM 12428 / JCM 9974 / NBRC 100139 / OT-3) protein is Endonuclease V.